Here is a 282-residue protein sequence, read N- to C-terminus: Formamidopyrimidine-DNA glycosylase (282 aa).

The active-site Schiff-base intermediate with DNA is proline 2. The active-site Proton donor is the glutamate 3. Lysine 60 acts as the Proton donor; for beta-elimination activity in catalysis. DNA-binding residues include histidine 99, arginine 118, and lysine 163. The FPG-type zinc-finger motif lies at 248 to 282 (LVYRRSGKNCKKCGEKILREKICGRSTHWCPNCQK). Catalysis depends on arginine 272, which acts as the Proton donor; for delta-elimination activity.

The protein belongs to the FPG family. Monomer. Zn(2+) serves as cofactor.

The enzyme catalyses Hydrolysis of DNA containing ring-opened 7-methylguanine residues, releasing 2,6-diamino-4-hydroxy-5-(N-methyl)formamidopyrimidine.. It catalyses the reaction 2'-deoxyribonucleotide-(2'-deoxyribose 5'-phosphate)-2'-deoxyribonucleotide-DNA = a 3'-end 2'-deoxyribonucleotide-(2,3-dehydro-2,3-deoxyribose 5'-phosphate)-DNA + a 5'-end 5'-phospho-2'-deoxyribonucleoside-DNA + H(+). Its function is as follows. Involved in base excision repair of DNA damaged by oxidation or by mutagenic agents. Acts as a DNA glycosylase that recognizes and removes damaged bases. Has a preference for oxidized purines, such as 7,8-dihydro-8-oxoguanine (8-oxoG). Has AP (apurinic/apyrimidinic) lyase activity and introduces nicks in the DNA strand. Cleaves the DNA backbone by beta-delta elimination to generate a single-strand break at the site of the removed base with both 3'- and 5'-phosphates. The sequence is that of Formamidopyrimidine-DNA glycosylase from Prochlorococcus marinus (strain NATL1A).